The following is a 227-amino-acid chain: Bone marrow proteoglycan (227 aa).

A signal peptide spans 1-16 (MKFPLLLALLVGGAFA). Residues 17 to 110 (LHLSSEASDS…TSLMGDSGFK (94 aa)) constitute a propeptide, acidic. Positions 21 to 105 (SEASDSKSPL…KEEDTTSLMG (85 aa)) are disordered. Serine 24 carries O-linked (GalNAc...) serine glycosylation. Residues 34–46 (SLPREAEISRPEV) show a composition bias toward basic and acidic residues. A compositionally biased stretch (acidic residues) spans 58–70 (LEEEEEEEEEEGS). O-linked (Xyl...) (chondroitin sulfate) serine glycosylation occurs at serine 70. One can recognise a C-type lectin domain in the interval 128-227 (LVCRSCYRGT…GKRRPFICAY (100 aa)). 2 disulfides stabilise this stretch: cysteine 130/cysteine 225 and cysteine 202/cysteine 217.

Nitrated.

The protein resides in the secreted. In terms of biological role, cytotoxin and helminthotoxin. MBP also induces non-cytolytic histamine release from basophils. It is involved in antiparasitic defense mechanisms and immune hypersensitivity reactions. This Rattus norvegicus (Rat) protein is Bone marrow proteoglycan (Prg2).